A 454-amino-acid polypeptide reads, in one-letter code: UDP-N-acetylmuramoylalanine--D-glutamate ligase (454 aa).

114-120 (GTNGKTT) lines the ATP pocket.

It belongs to the MurCDEF family.

Its subcellular location is the cytoplasm. It carries out the reaction UDP-N-acetyl-alpha-D-muramoyl-L-alanine + D-glutamate + ATP = UDP-N-acetyl-alpha-D-muramoyl-L-alanyl-D-glutamate + ADP + phosphate + H(+). It participates in cell wall biogenesis; peptidoglycan biosynthesis. Its function is as follows. Cell wall formation. Catalyzes the addition of glutamate to the nucleotide precursor UDP-N-acetylmuramoyl-L-alanine (UMA). This Desulfitobacterium hafniense (strain DSM 10664 / DCB-2) protein is UDP-N-acetylmuramoylalanine--D-glutamate ligase.